Consider the following 511-residue polypeptide: Arginine-containing cyclodipeptide synthase eshA (511 aa).

Residues 413–417 (DDSAE) carry the Conserved DDXXE motif motif.

It belongs to the arginine-containing cyclodipeptide synthase family.

The catalysed reaction is L-arginyl-tRNA(Arg) + L-leucyl-tRNA(Leu) = cyclo(L-arginyl-L-leucyl) + tRNA(Arg) + tRNA(Leu) + 2 H(+). The protein operates within secondary metabolite biosynthesis. Functionally, arginine-containing cyclodipeptide synthase; part of the cluster that mediates the biosynthesis of a highly modified cyclo-arginine-leucine dipeptide (cRW). Within the pathway, eshA acts as the scaffold-generating enzyme and is responsible for formation of the cyclo-Arg-Leu diketopiperazine (cRL) from L-arginyl-tRNA(Arg) + L-Leucyl-tRNA(Leu). Additional enzymes from the cluster then further modify the cyclo-Arg-Leu diketopiperazine (cRW) scaffold. This is Arginine-containing cyclodipeptide synthase eshA from Penicillium shearii (Eupenicillium shearii).